A 428-amino-acid chain; its full sequence is UPF0761 membrane protein TERTU_3006 (428 aa).

7 helical membrane passes run 47–67, 104–124, 143–163, 189–209, 218–238, 248–268, and 292–312; these read LFALVPLMTVTYTMFSAIPAF, LSGVGVVMLLVTAYLMLRNIE, YLLYWAILSVGPILVAAAFLL, VVPWALTSAAFTLLFVAVPNC, IGGVITAFAFEVVKAVFGYIV, GAFAVVPLFLLWVNLLWTIIL, and MIVVLICLALFREKAALGESV.

It belongs to the UPF0761 family.

The protein localises to the cell inner membrane. This is UPF0761 membrane protein TERTU_3006 from Teredinibacter turnerae (strain ATCC 39867 / T7901).